The following is a 134-amino-acid chain: Histone H2A (134 aa).

Residues 1–10 (MTGGKSGGKA) are compositionally biased toward gly residues. The segment at 1-26 (MTGGKSGGKASGSKSSAQSRSSKAGL) is disordered. An N6-acetyllysine mark is found at Lys5 and Lys9. The span at 11 to 25 (SGSKSSAQSRSSKAG) shows a compositional bias: low complexity. Position 107 is an N5-methylglutamine (Gln107). Phosphoserine is present on Ser131. Positions 131-132 (SQ) match the [ST]-Q motif motif.

It belongs to the histone H2A family. As to quaternary structure, the nucleosome is a histone octamer containing two molecules each of H2A, H2B, H3 and H4 assembled in one H3-H4 heterotetramer and two H2A-H2B heterodimers. The octamer wraps approximately 147 bp of DNA. Phosphorylated to form H2AS128ph (gamma-H2A) in response to DNA double-strand breaks (DSBs) generated by exogenous genotoxic agents and by stalled replication forks. Phosphorylation is dependent on the DNA damage checkpoint kinases MEC1/ATR and TEL1/ATM, spreads on either side of a detected DSB site and may mark the surrounding chromatin for recruitment of proteins required for DNA damage signaling and repair. Gamma-H2A is removed from the DNA prior to the strand invasion-primer extension step of the repair process and subsequently dephosphorylated. Dephosphorylation is necessary for efficient recovery from the DNA damage checkpoint. In terms of processing, acetylated by ESA1 to form H2AK4ac and H2AK7ac.

The protein localises to the nucleus. Its subcellular location is the chromosome. Functionally, core component of nucleosome which plays a central role in DNA double strand break (DSB) repair. Nucleosomes wrap and compact DNA into chromatin, limiting DNA accessibility to the cellular machineries which require DNA as a template. Histones thereby play a central role in transcription regulation, DNA repair, DNA replication and chromosomal stability. DNA accessibility is regulated via a complex set of post-translational modifications of histones, also called histone code, and nucleosome remodeling. The polypeptide is Histone H2A (HTA1) (Phaeosphaeria nodorum (strain SN15 / ATCC MYA-4574 / FGSC 10173) (Glume blotch fungus)).